We begin with the raw amino-acid sequence, 130 residues long: Small ribosomal subunit protein uS11 (130 aa).

A disordered region spans residues 109 to 130; it reads EDITPIPHDGTGRPGGKRGRRV.

The protein belongs to the universal ribosomal protein uS11 family. In terms of assembly, part of the 30S ribosomal subunit.

Located on the platform of the 30S subunit. This is Small ribosomal subunit protein uS11 from Methanobrevibacter smithii (strain ATCC 35061 / DSM 861 / OCM 144 / PS).